Here is a 220-residue protein sequence, read N- to C-terminus: Ribose-5-phosphate isomerase A (220 aa).

Substrate-binding positions include T28–T31, D81–D84, and K94–G97. The active-site Proton acceptor is the E103. Residue K121 participates in substrate binding.

Belongs to the ribose 5-phosphate isomerase family. Homodimer.

It catalyses the reaction aldehydo-D-ribose 5-phosphate = D-ribulose 5-phosphate. The protein operates within carbohydrate degradation; pentose phosphate pathway; D-ribose 5-phosphate from D-ribulose 5-phosphate (non-oxidative stage): step 1/1. Functionally, catalyzes the reversible conversion of ribose-5-phosphate to ribulose 5-phosphate. In Aromatoleum aromaticum (strain DSM 19018 / LMG 30748 / EbN1) (Azoarcus sp. (strain EbN1)), this protein is Ribose-5-phosphate isomerase A.